Consider the following 796-residue polypeptide: Transcription factor kayak (796 aa).

Disordered regions lie at residues 109-132 (AYQQQQSKQSYNNNNNSNSNSNTS), 315-341 (VVNNNNNNNNNNNNNSSNNNNNNSNTV), 374-429 (FNCG…GSNG), and 442-490 (VGSA…RNKL). A compositionally biased stretch (low complexity) spans 402–429 (TTDTSSAATDSTSYQNGGHMFGNNGSNG). Over residues 447–457 (RGTSSTSNNAT) the composition is skewed to polar residues. One can recognise a bZIP domain in the interval 478-541 (EEKRRVRRER…HQLNFVLEAH (64 aa)). Residues 480 to 499 (KRRVRRERNKLAAARCRKRR) form a basic motif region. The segment at 506–534 (LSEEVDGLLKKNEDLKKEIEILTNTRHQL) is leucine-zipper. The segment at 569 to 601 (SSGSNGSHHHNSNSNNSNNNNSNNNNNSNSNDS) is disordered. A Phosphoserine modification is found at Ser-621. Disordered regions lie at residues 642–661 (PHDAGLDSSSSLDQDGPPAA) and 774–796 (SSQNKHPLELPTPTSEPSKLVSL).

It belongs to the bZIP family. Fos subfamily. In terms of assembly, homodimer. Heterodimer with Jra. The kay-Jra heterodimer binds more stably to the AP-1 site than either of the two proteins alone.

The protein localises to the nucleus. In terms of biological role, developmentally regulated transcription factor AP-1 binds and recognizes the enhancer DNA sequence: 5'-TGA[CG]TCA-3'. May play a role in the function or determination of a particular subset of cells in the developing embryo. It is able to carry out its function either independently of or in conjunction with Jra. The chain is Transcription factor kayak from Drosophila grimshawi (Hawaiian fruit fly).